Reading from the N-terminus, the 243-residue chain is MSGHSKWSTIKRKKGTLDAKRNKIFTKLIREISIAARMGGGDIDSNPRLRLAVNKARVANMPKDNIEKAIKKGIGDNMGSEYFKLTYEAYALYGVALIIKCLTDNKNRTASEVRSVLSKSGGSLGAPGSVSYMFHKKGLISYNLDKYHEDEIIELALEAGAEDIYSEGSQVEVITSADNFESVSSILRTKFEEDIAEVALVPESKVALDKEQMDKVLAIIEKLEDCDDVQEVYHNLEIVDDIC.

The protein belongs to the TACO1 family.

The protein resides in the cytoplasm. The sequence is that of Probable transcriptional regulatory protein BRE_29 from Borrelia recurrentis (strain A1).